A 790-amino-acid polypeptide reads, in one-letter code: Penicillin-binding protein 1A (790 aa).

The Cytoplasmic segment spans residues 1–20 (MANVRKRRKKKNEHKALRLT). Residues 21 to 41 (FITLLMVFLFSCVAAAGVGLA) traverse the membrane as a helical; Signal-anchor for type II membrane protein segment. Residues 42-790 (MIKAAPPLDV…RKRKMIKPQI (749 aa)) lie on the Extracellular side of the membrane. A transglycosylase region spans residues 61–230 (SVIYDDKNKL…PQSPSTFYNA (170 aa)). Catalysis depends on Glu-100, which acts as the Proton donor; for transglycosylase activity. Residues 363–656 (ASVSIVDYKT…AALIWKLIMG (294 aa)) are transpeptidase. Residue Ser-402 is the Acyl-ester intermediate; for transpeptidase activity of the active site. A disordered region spans residues 720–790 (NKDKDDDDDD…RKRKMIKPQI (71 aa)). Acidic residues predominate over residues 724-740 (DDDDDDKDKDKEDEEEN). The segment covering 741 to 779 (KDEKNEDKKEAKDNTKNKDKDKKKDNDRKIDMDKKPDSS) has biased composition (basic and acidic residues). Residues 780-790 (KRKRKMIKPQI) are compositionally biased toward basic residues.

It in the N-terminal section; belongs to the glycosyltransferase 51 family. In the C-terminal section; belongs to the transpeptidase family.

The protein resides in the cell membrane. The enzyme catalyses [GlcNAc-(1-&gt;4)-Mur2Ac(oyl-L-Ala-gamma-D-Glu-L-Lys-D-Ala-D-Ala)](n)-di-trans,octa-cis-undecaprenyl diphosphate + beta-D-GlcNAc-(1-&gt;4)-Mur2Ac(oyl-L-Ala-gamma-D-Glu-L-Lys-D-Ala-D-Ala)-di-trans,octa-cis-undecaprenyl diphosphate = [GlcNAc-(1-&gt;4)-Mur2Ac(oyl-L-Ala-gamma-D-Glu-L-Lys-D-Ala-D-Ala)](n+1)-di-trans,octa-cis-undecaprenyl diphosphate + di-trans,octa-cis-undecaprenyl diphosphate + H(+). The catalysed reaction is Preferential cleavage: (Ac)2-L-Lys-D-Ala-|-D-Ala. Also transpeptidation of peptidyl-alanyl moieties that are N-acyl substituents of D-alanine.. It participates in cell wall biogenesis; peptidoglycan biosynthesis. Functionally, cell wall formation. Synthesis of cross-linked peptidoglycan from the lipid intermediates. The enzyme has a penicillin-insensitive transglycosylase N-terminal domain (formation of linear glycan strands) and a penicillin-sensitive transpeptidase C-terminal domain (cross-linking of the peptide subunits). The sequence is that of Penicillin-binding protein 1A (pbpA) from Clostridium tetani (strain Massachusetts / E88).